The sequence spans 74 residues: Lantibiotic lichenicidin A1 (74 aa).

Positions methionine 1–glycine 42 are excised as a propeptide. Threonine 43 is modified (2-oxobutanoic acid). The beta-methyllanthionine (Thr-Cys) cross-link spans threonine 45 to cysteine 49. Serine 47 is modified (2,3-didehydroalanine (Ser)). The residue at position 48 (threonine 48) is a (Z)-2,3-didehydrobutyrine. A cross-link (lanthionine (Ser-Cys)) is located at residues serine 53 to cysteine 63. Cross-links (beta-methyllanthionine (Thr-Cys)) lie at residues threonine 64–cysteine 69 and threonine 66–cysteine 73.

Maturation of lantibiotics involves the enzymatic conversion of Thr, and Ser into dehydrated AA and the formation of thioether bonds with cysteine. This is followed by membrane translocation and cleavage of the modified precursor.

Its subcellular location is the secreted. It is found in the cell wall. Its function is as follows. Lanthionine-containing peptide antibiotic (lantibiotic) active on Gram-positive bacteria. The bactericidal activity of lantibiotics is based on depolarization of energized bacterial cytoplasmic membranes, initiated by the formation of aqueous transmembrane pores. When present individually, LchA1 exhibits activity towards L.lactis HP. When combined with LchA2, it displays activity towards a broad spectrum of non-pathogenic and pathogenic Gram-positive bacteria including strains of L.monocytogenes, methicillin-resistant S.aureus, S.pneumoniae and strains of vancomycin-resistant enterococci, but not towards E.faecium L4001 and BM4147-1. Combined LchA1 and LchA2 peptides also inhibit Bacillus sp. HIL-Y85/54728, L.lactis DPC3417 and B.halodurans C-125, which produce lantibiotics themselves. Inactivated by proteinase K and pronase E, but not by trypsin and chymotrypsin. This is Lantibiotic lichenicidin A1 from Bacillus licheniformis (strain ATCC 14580 / DSM 13 / JCM 2505 / CCUG 7422 / NBRC 12200 / NCIMB 9375 / NCTC 10341 / NRRL NRS-1264 / Gibson 46).